Reading from the N-terminus, the 1203-residue chain is DNA-directed RNA polymerase subunit beta (1203 aa).

Residues 1174–1195 show a composition bias toward basic and acidic residues; sequence AAQEAKAAFEAEEAEKATKAEA. The disordered stretch occupies residues 1174–1203; the sequence is AAQEAKAAFEAEEAEKATKAEATEEAAEQE.

The protein belongs to the RNA polymerase beta chain family. As to quaternary structure, the RNAP catalytic core consists of 2 alpha, 1 beta, 1 beta' and 1 omega subunit. When a sigma factor is associated with the core the holoenzyme is formed, which can initiate transcription.

It catalyses the reaction RNA(n) + a ribonucleoside 5'-triphosphate = RNA(n+1) + diphosphate. DNA-dependent RNA polymerase catalyzes the transcription of DNA into RNA using the four ribonucleoside triphosphates as substrates. In Streptococcus pneumoniae (strain ATCC 700669 / Spain 23F-1), this protein is DNA-directed RNA polymerase subunit beta.